We begin with the raw amino-acid sequence, 155 residues long: Small ribosomal subunit protein bS16 (155 aa).

The disordered stretch occupies residues 100 to 155; sequence EAGIPDPAPSTEEPAAVCEASAEMAGQPGEVEPAGAAAEPNSQEPEPEEEKPQVEA. The span at 124-143 shows a compositional bias: low complexity; the sequence is AGQPGEVEPAGAAAEPNSQE.

This sequence belongs to the bacterial ribosomal protein bS16 family.

The sequence is that of Small ribosomal subunit protein bS16 from Synechococcus sp. (strain JA-3-3Ab) (Cyanobacteria bacterium Yellowstone A-Prime).